Consider the following 466-residue polypeptide: Putative multidrug resistance protein MdtD (466 aa).

The next 14 helical transmembrane spans lie at 11–31 (LWIVAFGFFMQTLDTTIVNTA), 48–68 (SVIVSYVLTVAVMLPASGWLA), 71–91 (IGVKNIFFAAILLFTLGSLLC), 105–125 (VIQGIGGAMMVPVGRLTVMKI), 137–157 (FVTLPGQIGPLLGPALGGFLV), 164–184 (WIFLINLPVGIIGALATWFLM), 194–214 (FDISGFVWLAVGMATLTLALD), 218–238 (SLGIPPIAIFALIAIGLIALL), 262–282 (FSIGLTGGLLARIGSGMLPFM), 292–312 (GFSPFHAGLMMVPMVLGSMGI), 328–347 (VLVASTLLLALVTALFALVA), 351–370 (WIWMIPVVLFFLGTVNAIRF), 402–422 (SLGVSIAGILLGIFSQPHIAA), and 429–449 (TVFLYTYLSMVVIIALPALIF).

The protein belongs to the major facilitator superfamily. TCR/Tet family.

The protein localises to the cell inner membrane. In Pectobacterium atrosepticum (strain SCRI 1043 / ATCC BAA-672) (Erwinia carotovora subsp. atroseptica), this protein is Putative multidrug resistance protein MdtD.